We begin with the raw amino-acid sequence, 131 residues long: MKFSELAPRERHNFVYFLLFFFFYHFIMSAYFPFFPVWLADVNHLTKTETGIVFSSISLFAIIFQPVFGLMSDKLGLRKHLLWTITVLLILFAPFFIFVFSPLLQMNIIAGSLVGGIYLGIVFSTAPGVGS.

The Cytoplasmic segment spans residues methionine 1 to asparagine 13. The helical transmembrane segment at phenylalanine 14–phenylalanine 34 threads the bilayer. Topologically, residues phenylalanine 35–threonine 50 are periplasmic. The helical transmembrane segment at glycine 51 to methionine 71 threads the bilayer. Topologically, residues serine 72–histidine 80 are cytoplasmic. Residues leucine 81–serine 101 traverse the membrane as a helical segment. A topological domain (periplasmic) is located at residue proline 102. The helical transmembrane segment at leucine 103–phenylalanine 123 threads the bilayer. Residues serine 124–serine 131 are Cytoplasmic-facing.

Belongs to the major facilitator superfamily. Oligosaccharide:H(+) symporter (OHS) (TC 2.A.1.5) family.

The protein resides in the cell inner membrane. The enzyme catalyses lactose(in) + H(+)(in) = lactose(out) + H(+)(out). In terms of biological role, responsible for transport of beta-galactosides into the cell, with the concomitant import of a proton (symport system). The protein is Lactose permease (lacY) of Klebsiella pneumoniae.